We begin with the raw amino-acid sequence, 461 residues long: B3 domain-containing protein REM9 (461 aa).

The TF-B3 1 DNA-binding region spans 11–103 (NQHFFQPLLP…VFHVTALGPS (93 aa)). Residues 110-146 (PQSSRHEEGEESGENEISEKEGEENVQKESDKSSSDL) form a disordered region. Basic and acidic residues predominate over residues 126-143 (ISEKEGEENVQKESDKSS). 2 consecutive DNA-binding regions (TF-B3) follow at residues 148–244 (CFSQ…CSRT) and 230–332 (LQKA…EQPS). Residues 333-415 (FKAEDGRHKR…SGIEGNLQHT (83 aa)) are disordered. The segment covering 384–394 (PKVEIREKIAE) has biased composition (basic and acidic residues). Polar residues predominate over residues 400–415 (RASNKSSGIEGNLQHT).

It localises to the nucleus. The polypeptide is B3 domain-containing protein REM9 (REM9) (Arabidopsis thaliana (Mouse-ear cress)).